The sequence spans 259 residues: HTH-type quorum sensing-dependent transcriptional regulator VjbR (259 aa).

Positions K76–G179 are C12-HSL binding. The region spanning A183 to G248 is the HTH luxR-type domain. The H-T-H motif DNA-binding region spans D207–Q226.

Functionally, transcriptional regulator involved in the global control of Brucella gene expression. Mediates the effects of the quorum sensing autoinducer C12-HSL (N-dodecanoyl-homoserine lactone) on a large and diverse number of genes. The protein is HTH-type quorum sensing-dependent transcriptional regulator VjbR (vjbR) of Brucella suis biovar 1 (strain 1330).